The following is a 719-amino-acid chain: Polyribonucleotide nucleotidyltransferase (719 aa).

Aspartate 490 and aspartate 496 together coordinate Mg(2+). Positions 557–619 constitute a KH domain; that stretch reads PKIEIIIIPK…KSIDAALTRI (63 aa). An S1 motif domain is found at 629–699; that stretch reads GEIYEGKIRS…KTGKFKLSHK (71 aa).

The protein belongs to the polyribonucleotide nucleotidyltransferase family. The cofactor is Mg(2+).

It is found in the cytoplasm. It catalyses the reaction RNA(n+1) + phosphate = RNA(n) + a ribonucleoside 5'-diphosphate. Functionally, involved in mRNA degradation. Catalyzes the phosphorolysis of single-stranded polyribonucleotides processively in the 3'- to 5'-direction. The chain is Polyribonucleotide nucleotidyltransferase from Azobacteroides pseudotrichonymphae genomovar. CFP2.